A 329-amino-acid polypeptide reads, in one-letter code: Biotin synthase (329 aa).

The 230-residue stretch at Phe46–Ser275 folds into the Radical SAM core domain. [4Fe-4S] cluster contacts are provided by Cys64, Cys68, and Cys71. [2Fe-2S] cluster-binding residues include Cys108, Cys140, Cys200, and Arg273.

Belongs to the radical SAM superfamily. Biotin synthase family. In terms of assembly, homodimer. It depends on [4Fe-4S] cluster as a cofactor. [2Fe-2S] cluster is required as a cofactor.

It catalyses the reaction (4R,5S)-dethiobiotin + (sulfur carrier)-SH + 2 reduced [2Fe-2S]-[ferredoxin] + 2 S-adenosyl-L-methionine = (sulfur carrier)-H + biotin + 2 5'-deoxyadenosine + 2 L-methionine + 2 oxidized [2Fe-2S]-[ferredoxin]. Its pathway is cofactor biosynthesis; biotin biosynthesis; biotin from 7,8-diaminononanoate: step 2/2. In terms of biological role, catalyzes the conversion of dethiobiotin (DTB) to biotin by the insertion of a sulfur atom into dethiobiotin via a radical-based mechanism. The sequence is that of Biotin synthase from Thermus thermophilus (strain ATCC 27634 / DSM 579 / HB8).